Reading from the N-terminus, the 249-residue chain is Type III pantothenate kinase (249 aa).

Residue 6–13 coordinates ATP; the sequence is DCGNSFIK. Residues Tyr-93 and 100 to 103 each bind substrate; that span reads GMDR. Asp-102 acts as the Proton acceptor in catalysis. Position 122 (Asp-122) interacts with K(+). Thr-125 contributes to the ATP binding site. Substrate is bound at residue Thr-181.

Belongs to the type III pantothenate kinase family. In terms of assembly, homodimer. NH4(+) is required as a cofactor. It depends on K(+) as a cofactor.

It localises to the cytoplasm. The enzyme catalyses (R)-pantothenate + ATP = (R)-4'-phosphopantothenate + ADP + H(+). It participates in cofactor biosynthesis; coenzyme A biosynthesis; CoA from (R)-pantothenate: step 1/5. In terms of biological role, catalyzes the phosphorylation of pantothenate (Pan), the first step in CoA biosynthesis. This is Type III pantothenate kinase from Pseudomonas putida (strain ATCC 700007 / DSM 6899 / JCM 31910 / BCRC 17059 / LMG 24140 / F1).